Here is a 495-residue protein sequence, read N- to C-terminus: Muscle LIM protein Mlp84B (495 aa).

Residues 12–63 (CPRCGKSVYAAEERLAGGYVFHKNCFKCGMCNKSLDSTNCTEHERELYCKTC) form the LIM zinc-binding 1 domain. A Nuclear localization signal motif is present at residues 66-71 (RKFGPK). In terms of domain architecture, LIM zinc-binding 2 spans 120-172 (CPRCGGYVYAAEQMLARGRSWHKECFKCGTCKKGLDSILCCEAPDKNIYCKGC). The short motif at 175-180 (KKFGPK) is the Nuclear localization signal element. LIM zinc-binding domains follow at residues 222 to 274 (CPRC…CRTC), 325 to 377 (CPRC…CRAC), and 421 to 473 (CPRC…CRAC).

In the embryo, expression is restricted to the somatic, visceral, and pharyngeal muscles. Within the somatic musculature, expression is localized at the ends of muscles fibers at the point of attachment to the epidermis (at protein level). There is no expression in cardiac mesoderm or in fat body.

Its subcellular location is the cytoplasm. It is found in the nucleus. Plays a role in cell differentiation late in myogenesis. Transcription factor Mef2 is essential for expression. The sequence is that of Muscle LIM protein Mlp84B from Drosophila melanogaster (Fruit fly).